Consider the following 97-residue polypeptide: Large ribosomal subunit protein bL28 (97 aa).

The protein belongs to the bacterial ribosomal protein bL28 family.

In Rickettsia akari (strain Hartford), this protein is Large ribosomal subunit protein bL28.